Here is a 511-residue protein sequence, read N- to C-terminus: Small ribosomal subunit protein uS4m (511 aa).

Positions 202 to 272 (KRLDVVLYRS…IKNNLFSNIN (71 aa)) constitute an S4 RNA-binding domain.

It belongs to the universal ribosomal protein uS4 family.

It is found in the mitochondrion. The chain is Small ribosomal subunit protein uS4m (RPS4) from Prototheca wickerhamii.